A 249-amino-acid chain; its full sequence is Serine 3-dehydrogenase (249 aa).

An NADP(+)-binding site is contributed by L6–I30. S135 is a substrate binding site. Y148 acts as the Proton acceptor in catalysis.

The protein belongs to the short-chain dehydrogenases/reductases (SDR) family. As to quaternary structure, homotetramer.

The enzyme catalyses L-serine + NADP(+) = aminoacetaldehyde + CO2 + NADPH. Functionally, catalyzes the oxidation of the hydroxyl group of serine to form 2-aminomalonate semialdehyde which is spontaneously converted into 2-aminoacetaldehyde and CO(2). Also acts on D-serine, L-glycerate, D-glycerate and 2-methyl-DL-serine. Does not act on O-methyl-DL-serine and L-threonine. In Agrobacterium fabrum (strain C58 / ATCC 33970) (Agrobacterium tumefaciens (strain C58)), this protein is Serine 3-dehydrogenase (sdh).